Consider the following 127-residue polypeptide: Gamma-synuclein (127 aa).

2 repeat units span residues 20-30 and 31-41. The tract at residues 20–67 is 4 X 11 AA tandem repeats of [EGSA]-K-T-K-[EQ]-[GQ]-V-X(4); the sequence is EKTKQGVTEAAEKTKEGVMYVGAKTKENVVQSVTSVAEKTKEQANAVS. The stretch at 42–56 is one 3; approximate repeat; it reads AKTKENVVQSVTSVA. The stretch at 57-67 is repeat 4; it reads EKTKEQANAVS. 2 positions are modified to phosphoserine: Ser-67 and Ser-72. The segment at 96–127 is disordered; the sequence is RKEDLRPSAPQQEGEASKEKEEVAEEAQSGGD. Ser-124 is modified (phosphoserine; by BARK1, CaMK2 and CK2).

Belongs to the synuclein family. As to quaternary structure, may be a centrosome-associated protein. Interacts with MYOC; affects its secretion and its aggregation. Post-translationally, phosphorylated. Phosphorylation by GRK5 appears to occur on residues distinct from the residue phosphorylated by other kinases. As to expression, highly expressed in brain, particularly in the substantia nigra. Also expressed in the corpus callosum, heart, skeletal muscle, ovary, testis, colon and spleen. Weak expression in pancreas, kidney and lung.

It localises to the cytoplasm. The protein localises to the perinuclear region. It is found in the cytoskeleton. Its subcellular location is the microtubule organizing center. The protein resides in the centrosome. It localises to the spindle. Its function is as follows. Plays a role in neurofilament network integrity. May be involved in modulating axonal architecture during development and in the adult. In vitro, increases the susceptibility of neurofilament-H to calcium-dependent proteases. May also function in modulating the keratin network in skin. Activates the MAPK and Elk-1 signal transduction pathway. This Homo sapiens (Human) protein is Gamma-synuclein (SNCG).